The sequence spans 120 residues: Response regulator receiver protein CpdR (120 aa).

Positions 3-117 (RILLAEDDND…DLVNEIEKML (115 aa)) constitute a Response regulatory domain. 4-aspartylphosphate is present on aspartate 52.

Is phosphorylated by ChpT-P on Asp-52.

The protein localises to the cytoplasm. Its function is as follows. Component of a regulatory phosphorelay system that controls B.abortus cell growth, division, and intracellular survival inside mammalian host cells. This signaling pathway is composed of CckA, ChpT, CtrA and CpdR. CpdR is a response regulator substrate of ChpT. Unphosphorylated CpdR controls steady-state levels of CtrA in the B.abortus cell, likely via CtrA destabilization and activation of its proteolysis. This chain is Response regulator receiver protein CpdR, found in Brucella abortus (strain 2308).